Here is a 203-residue protein sequence, read N- to C-terminus: GTP-binding protein ypt1 (203 aa).

GTP contacts are provided by residues 15-23 (GDSGVGKSC), 33-40 (YTESYIST), 63-67 (DTAGQ), 121-124 (NKSD), and 151-153 (SAK). The short motif at 37 to 45 (YISTIGVDF) is the Effector region element. The segment at 180 to 203 (NNTKASVNVSPGHGVSNNSSGGCC) is disordered. S-geranylgeranyl cysteine attachment occurs at residues Cys-202 and Cys-203.

This sequence belongs to the small GTPase superfamily. Rab family.

It localises to the endoplasmic reticulum membrane. It is found in the golgi apparatus membrane. The protein resides in the cytoplasm. The protein localises to the preautophagosomal structure membrane. Rab activation is generally mediated by a guanine exchange factor (GEF), while inactivation through hydrolysis of bound GTP is catalyzed by a GTPase activating protein (GAP). In terms of biological role, the small GTPases Rab are key regulators of intracellular membrane trafficking, from the formation of transport vesicles to their fusion with membranes. Rabs cycle between an inactive GDP-bound form and an active GTP-bound form that is able to recruit to membranes different set of downstream effectors directly responsible for vesicle formation, movement, tethering and fusion. Ypt-1 regulates the trafficking of secretory vesicles from the endoplasmic reticulum (ER) to the Golgi. Plays a role in the initial events of the autophagic vacuole development which take place at specialized regions of the endoplasmic reticulum. Also involved in the recycling of membrane proteins. In Neurospora crassa (strain ATCC 24698 / 74-OR23-1A / CBS 708.71 / DSM 1257 / FGSC 987), this protein is GTP-binding protein ypt1 (ypt-1).